Here is a 163-residue protein sequence, read N- to C-terminus: MADSSFDIVSKVDRQEVDNALNQAAKELATRFDFRGTDTTIAWKGDEAIELTSSTGERVKAAVDVFKEKLIRRDISMKAFDAGEPQASGKTYKVNGTLKQGISSESAKKITKLIRDEGPKGVKTQIQGDEIRVSSKKRDDLQAVIAMLKQADLDVALQFVNYR.

It belongs to the YajQ family.

Its function is as follows. Nucleotide-binding protein. The sequence is that of Nucleotide-binding protein MAP_4063c from Mycolicibacterium paratuberculosis (strain ATCC BAA-968 / K-10) (Mycobacterium paratuberculosis).